The sequence spans 375 residues: Succinyl-diaminopimelate desuccinylase (375 aa).

H66 is a Zn(2+) binding site. D68 is a catalytic residue. Zn(2+) is bound at residue D99. Residue E133 is the Proton acceptor of the active site. 3 residues coordinate Zn(2+): E134, E162, and H348.

The protein belongs to the peptidase M20A family. DapE subfamily. In terms of assembly, homodimer. It depends on Zn(2+) as a cofactor. Requires Co(2+) as cofactor.

The enzyme catalyses N-succinyl-(2S,6S)-2,6-diaminopimelate + H2O = (2S,6S)-2,6-diaminopimelate + succinate. It participates in amino-acid biosynthesis; L-lysine biosynthesis via DAP pathway; LL-2,6-diaminopimelate from (S)-tetrahydrodipicolinate (succinylase route): step 3/3. In terms of biological role, catalyzes the hydrolysis of N-succinyl-L,L-diaminopimelic acid (SDAP), forming succinate and LL-2,6-diaminopimelate (DAP), an intermediate involved in the bacterial biosynthesis of lysine and meso-diaminopimelic acid, an essential component of bacterial cell walls. This chain is Succinyl-diaminopimelate desuccinylase, found in Escherichia coli O17:K52:H18 (strain UMN026 / ExPEC).